The following is a 337-amino-acid chain: Histidine N-acetyltransferase (337 aa).

The propeptide at 1–2 (MK) is removed in mature form. In terms of domain architecture, N-acetyltransferase spans 21-156 (LQFAVATEED…QGILLVRFRA (136 aa)).

The catalysed reaction is L-histidine + acetyl-CoA = N(alpha)-acetyl-L-histidine + CoA + H(+). In terms of biological role, enzyme responsible for the N-acetyl-histidine (NAH) synthesis, which is a major constituent of brain and lens of ectothermic vertebrates. In Scomber australasicus (Blue mackerel), this protein is Histidine N-acetyltransferase (hisat).